A 182-amino-acid polypeptide reads, in one-letter code: Constitutive photomorphogenesis protein 10 (182 aa).

One can recognise a UBC core domain in the interval 36 to 182 (ASGKRIQREM…AKEWTLRFAK (147 aa)).

The protein belongs to the ubiquitin-conjugating enzyme family. Component of the CDD complex, at least composed of COP10, DET1 and DDB1A. Interacts with E3 ubiquitin ligase COP1. Interacts with E2 ubiquitin conjugating UBC5. Interacts with CSN3, CSN4 and CSN8 subunits of the COP9 complex. Expressed in flower, leaf, stem and seedling. Expressed at lower level in root.

The protein localises to the nucleus. In terms of biological role, component of light signal transduction machinery. Involved in repression of photomorphogenesis in darkness by participating in the CDD complex, a complex probably required to regulate the activity of ubiquitin conjugating enzymes (E2s). Repression of photomorphogenesis is probably mediated by ubiquitination and subsequent degradation of photomorphogenesis-promoting factors such as HY5, HYH and LAF1. Although strongly related to ubiquitin-conjugating enzyme, it has no catalytic activity by itself due to the absence of the conserved Cys active site at position 120. It can however enhance the activity of E2 conjugating enzymes. This Arabidopsis thaliana (Mouse-ear cress) protein is Constitutive photomorphogenesis protein 10 (COP10).